The following is a 557-amino-acid chain: Resveratrol cleavage oxygenase 1 (557 aa).

A disordered region spans residues 1–46 (MAILNDPPSSTTILSLHTPDVPPPSKPTPATTSHPQDSRNPRNLTS). Piceatannol is bound by residues Tyr144 and Lys177. Tyr144 and Lys177 together coordinate trans-resveratrol. 3 residues coordinate Fe cation: His211, His262, and His334. Position 404 (Glu404) interacts with piceatannol. Glu404 is a binding site for trans-resveratrol. His523 contributes to the Fe cation binding site.

Belongs to the carotenoid oxygenase family. Fe(2+) serves as cofactor.

The catalysed reaction is trans-resveratrol + O2 = 3,5-dihydroxybenzaldehyde + 4-hydroxybenzaldehyde. It carries out the reaction piceatannol + O2 = 3,5-dihydroxybenzaldehyde + 3,4-dihydroxybenzaldehyde. Functionally, dioxygenase that cleaves the interphenyl C-alpha-C-beta double bond of resveratrol to yield 3,5-dihydroxybenzaldehyde and 4-hydroxybenzaldehyde. Also cleaves piceatannol, a compound that differs from resveratrol only in the occurrence of an additional hydroxyl group, which leads to the production of 3,4-dihydroxybenzaldehyde and 3,5-hydroxybenzaldehyde. The polypeptide is Resveratrol cleavage oxygenase 1 (Botryotinia fuckeliana (strain B05.10) (Noble rot fungus)).